The following is a 962-amino-acid chain: MTFSMRDLDQALQGAGQKSGIEIWRIENFKPVTVPQESHGKFFTGDSYIVLKTTASRSGSLHHDIHYWLGKDSSQDEAGAVAVMTVELDSALGGRAVQYREVQGHETEKFLSYFKPCIIPQEGGVASGFNHVKPEEHQTRLYICKGKHVVRVKEVPFVRSTLNHEDVFILDTESKIFQFSGSKSSIQERAKALEVVQYIKDTYHDGKCDIAAVEDGRMMADAEAGEFWGLFGGFAPLPKKPAVNDDETAASDGIKLFSVEKGQTDAVEAECLTKELLDTNKCYILDCGLELFVWKGRSTSIDQRKSATEAAEEFFRSSEPPKSNLVSVMEGYETVMFRSKFDSWPASSTIAEPQQGRGKVAALLQRQGVNVQGLVKTSSSSSKDEPKPYIDGTGNLQVWRINCEEKILLEAAEQSKFYSGDCYILQYSYPGEDREEHLVGTWFGKQSVEEDRASAISLANKMVESMKFVPAQARINEGKEPIQFFVIMQSFITFKGGVSDAFKKYIAENDIPDTTYEAEGVALFRVQGSGPENMQAIQIEAASAGLNSSHCYILHGDSTVFTWCGNLTSSEDQELMERMLDLIKPNEPTKAQKEGSESEQFWELLGGKSEYPSQKIKRDGESDPHLFSCTYTNESLKATEIFNFTQDDLMTEDIFILDCHTEVFVWVGQQVDPKKKPQALDIGENFLKHDFLLENLASETPIYIVTEGNEPPFFTRFFTWDSSKSGMHGDSFQRKLAILTNKGKPLLDKPKRRVPAYSSRSTVPDKSQPRSRSMTFSPDRARVRGRSPAFNALAANFEKLNIRNQSTPPPMVSPMVRKLYPKSHAPDLSKIAPKSAIAARTALFEKPTPTSQEPPTSPSSSEATNQAEAPKSTSETNEEEAMSSINEDSKEEEAEEESSLPTFPYERLKTDSEDPVSDVDLTRREAYLTSVEFKEKFEMTKNEFYKLPKWKQNKLKMSVNLF.

6 Gelsolin-like repeats span residues 29–79 (FKPV…DEAG), 150–190 (VRVK…QERA), 262–305 (GQTD…DQRK), 396–453 (LQVW…EDRA), 534–574 (MQAI…EDQE), and 636–677 (LKAT…KKKP). The disordered stretch occupies residues 749 to 785 (KPKRRVPAYSSRSTVPDKSQPRSRSMTFSPDRARVRG). Polar residues predominate over residues 758-776 (SSRSTVPDKSQPRSRSMTF). Residues Ser777 and Ser787 each carry the phosphoserine modification. The segment covering 845–862 (EKPTPTSQEPPTSPSSSE) has biased composition (low complexity). The disordered stretch occupies residues 845–917 (EKPTPTSQEP…LKTDSEDPVS (73 aa)). Positions 863–875 (ATNQAEAPKSTSE) are enriched in polar residues. Ser883 bears the Phosphoserine mark. Acidic residues predominate over residues 889–898 (SKEEEAEEES). The region spanning 897–962 (ESSLPTFPYE…NKLKMSVNLF (66 aa)) is the HP domain.

It belongs to the villin/gelsolin family. As to expression, ubiquitous, but expressed preferentially in pollen and stamens.

Its subcellular location is the cytoplasm. The protein localises to the cytoskeleton. In terms of biological role, major actin filament stabilizing factor and regulator of actin dynamics. Binds actin and actin filament bundles in a Ca(2+)-insensitive manner, but caps the barbed end of actin filaments and is able to sever them in a calcium-dependent manner. Required for the construction of actin collars in pollen tubes. Acts synergistically with VLN2 (AC O81644) to regulate polarized pollen tube growth. The polypeptide is Villin-5 (Arabidopsis thaliana (Mouse-ear cress)).